Consider the following 395-residue polypeptide: Gastric triacylglycerol lipase (395 aa).

Residues 1-18 (MWLLLITSVISTFGGAHG) form the signal peptide. Residues Asn-33, Asn-68, and Asn-98 are each glycosylated (N-linked (GlcNAc...) asparagine). Residues 77–376 (PVVYLQHGLI…LAYNHLDFIW (300 aa)) form the AB hydrolase-1 domain. The active-site Nucleophile is Ser-171. A disulfide bond links Cys-245 and Cys-254. A glycan (N-linked (GlcNAc...) asparagine) is linked at Asn-270. Residues Asp-342 and His-371 each act as charge relay system in the active site.

This sequence belongs to the AB hydrolase superfamily. Lipase family. As to expression, secreted by the serous (von Ebner's) glands at the back of the rat tongue.

It localises to the secreted. It carries out the reaction a triacylglycerol + H2O = a diacylglycerol + a fatty acid + H(+). The catalysed reaction is 1,2,3-tri-(9Z-octadecenoyl)-glycerol + H2O = 1,2-di-(9Z-octadecenoyl)-sn-glycerol + (9Z)-octadecenoate + H(+). The enzyme catalyses 1,2,3-trioctanoylglycerol + H2O = 1,2-dioctanoyl-sn-glycerol + octanoate + H(+). In terms of biological role, catalyzes the hydrolysis of triacylglycerols to yield free fatty acids, diacylglycerol, monoacylglycerol, and glycerol. Shows a preferential hydrolysis at the sn-3 position of triacylglycerol. The polypeptide is Gastric triacylglycerol lipase (Lipf) (Rattus norvegicus (Rat)).